We begin with the raw amino-acid sequence, 144 residues long: Large ribosomal subunit protein uL11 (144 aa).

It belongs to the universal ribosomal protein uL11 family. In terms of assembly, part of the ribosomal stalk of the 50S ribosomal subunit. Interacts with L10 and the large rRNA to form the base of the stalk. L10 forms an elongated spine to which L12 dimers bind in a sequential fashion forming a multimeric L10(L12)X complex. In terms of processing, one or more lysine residues are methylated.

Forms part of the ribosomal stalk which helps the ribosome interact with GTP-bound translation factors. The sequence is that of Large ribosomal subunit protein uL11 from Streptomyces avermitilis (strain ATCC 31267 / DSM 46492 / JCM 5070 / NBRC 14893 / NCIMB 12804 / NRRL 8165 / MA-4680).